A 41-amino-acid polypeptide reads, in one-letter code: Large ribosomal subunit protein bL36 (41 aa).

This sequence belongs to the bacterial ribosomal protein bL36 family.

This is Large ribosomal subunit protein bL36 from Rhodopseudomonas palustris (strain TIE-1).